The sequence spans 306 residues: ADP-polyphosphate phosphotransferase 2 (306 aa).

It belongs to the polyphosphate kinase 2 (PPK2) family. Class I subfamily.

It catalyses the reaction [phosphate](n) + ATP = [phosphate](n+1) + ADP. The enzyme catalyses [phosphate](n) + GTP = [phosphate](n+1) + GDP. Functionally, uses inorganic polyphosphate (polyP) as a donor to convert ADP to ATP. Can also convert GDP to GTP, with lower efficiency. The sequence is that of ADP-polyphosphate phosphotransferase 2 from Rhizobium meliloti (strain 1021) (Ensifer meliloti).